A 291-amino-acid polypeptide reads, in one-letter code: MAGSLSEIKAKIISTEKTSKITSAMRMVSSAKLVKSEQAARDFQIYASKIRQITTDLLKSDLTTGSDNPMLVSRPVKKTGYIVITSDKGLVGGYNSKILKSIMDMIQEYHAAGDYEIISIGSIGSDFFKARGMNVAFELRGLADQPSFDQVGRIISQSVDMFVNEIFDELYVCYNHHVNSLTSQVRVQRMLPISDLVAEEAAEEGVTGFELEPNRHVILEQLLPQFTESLIYGAIIDAKTAEHAAGMTAMQTATDNAKHVINDLTIQYNRARQAAITQEITEIVAGANALE.

Belongs to the ATPase gamma chain family. As to quaternary structure, F-type ATPases have 2 components, CF(1) - the catalytic core - and CF(0) - the membrane proton channel. CF(1) has five subunits: alpha(3), beta(3), gamma(1), delta(1), epsilon(1). CF(0) has three main subunits: a, b and c.

It is found in the cell membrane. Produces ATP from ADP in the presence of a proton gradient across the membrane. The gamma chain is believed to be important in regulating ATPase activity and the flow of protons through the CF(0) complex. In Streptococcus equi subsp. zooepidemicus (strain MGCS10565), this protein is ATP synthase gamma chain.